A 211-amino-acid chain; its full sequence is Tudor-interacting repair regulator protein (211 aa).

Residues Lys10 and Lys151 each participate in a glycyl lysine isopeptide (Lys-Gly) (interchain with G-Cter in ubiquitin) cross-link. The segment at 118–205 (TLEQLHAVEI…TEKQKKALEK (88 aa)) is interaction with PXN.

This sequence belongs to the Nudix hydrolase family. TIRR subfamily. Homodimer. Interacts with TP53BP1 (via the Tudor-like domain); interaction is abolished following DNA damage and TP53BP1 phosphorylation by ATM. Interacts (via the cytoplasmic part) with SDC4. Interacts with TGFB1I1 and PXN.

It localises to the nucleus. Key regulator of TP53BP1 required to stabilize TP53BP1 and regulate its recruitment to chromatin. In absence of DNA damage, interacts with the tandem Tudor-like domain of TP53BP1, masking the region that binds histone H4 dimethylated at 'Lys-20' (H4K20me2), thereby preventing TP53BP1 recruitment to chromatin and maintaining TP53BP1 localization to the nucleus. Following DNA damage, ATM-induced phosphorylation of TP53BP1 and subsequent recruitment of RIF1 leads to dissociate NUDT16L1/TIRR from TP53BP1, unmasking the tandem Tudor-like domain and allowing recruitment of TP53BP1 to DNA double strand breaks (DSBs). Binds U8 snoRNA. This is Tudor-interacting repair regulator protein from Mus musculus (Mouse).